The chain runs to 313 residues: Meiotically up-regulated gene 100 protein, mitochondrial (313 aa).

2 helical membrane passes run valine 147 to glycine 167 and serine 178 to phenylalanine 198.

The protein resides in the mitochondrion inner membrane. In terms of biological role, has a role in meiosis. In Schizosaccharomyces pombe (strain 972 / ATCC 24843) (Fission yeast), this protein is Meiotically up-regulated gene 100 protein, mitochondrial (mug100).